Here is a 270-residue protein sequence, read N- to C-terminus: MAAPGEALTQSGYIEHHLSNLSLAKLGMVADETSFWNVHIDSLFFSVLTGMLFLWVFRSVAKKATTGVPGKLQCFVEMVVEFVADNVKETFHGRNPLVAPLALTIFCWVILMNLMDLIPIDFLPYSAAHWLGIPYLKVVPSADVNITMAMALGVFALMIYYSIKVKGLGGFAKELALHPFNHPIMIPFNLLLEVISLLAKPLSLGMRLFGNMFAGEVVFILIAAMLPWYLQWVGALPWAIFHILVILIQAFVFMMLTIVYLSMAHEDPDH.

The next 5 membrane-spanning stretches (helical) occupy residues 37-57, 98-118, 143-163, 217-237, and 239-259; these read NVHI…LWVF, VAPL…MDLI, DVNI…YYSI, VVFI…GALP, and AIFH…LTIV.

The protein belongs to the ATPase A chain family. In terms of assembly, F-type ATPases have 2 components, CF(1) - the catalytic core - and CF(0) - the membrane proton channel. CF(1) has five subunits: alpha(3), beta(3), gamma(1), delta(1), epsilon(1). CF(0) has three main subunits: a(1), b(2) and c(9-12). The alpha and beta chains form an alternating ring which encloses part of the gamma chain. CF(1) is attached to CF(0) by a central stalk formed by the gamma and epsilon chains, while a peripheral stalk is formed by the delta and b chains.

The protein localises to the cell inner membrane. Its function is as follows. Key component of the proton channel; it plays a direct role in the translocation of protons across the membrane. In Aliivibrio salmonicida (strain LFI1238) (Vibrio salmonicida (strain LFI1238)), this protein is ATP synthase subunit a.